We begin with the raw amino-acid sequence, 307 residues long: Formate hydrogenlyase subunit 4 (307 aa).

Topologically, residues 1-2 (MS) are periplasmic. Residues 3–23 (VLYPLIQALVLFAVAPLLSGI) traverse the membrane as a helical segment. The Cytoplasmic segment spans residues 24–67 (TRVARARLHNRRGPGVLQEYRDIIKLLGRQSVGPDASGWVFRLT). Residues 68 to 88 (PYVMVGVMLTIATALPVVTVG) traverse the membrane as a helical segment. Over 89 to 93 (SPLPQ) the chain is Periplasmic. A helical transmembrane segment spans residues 94-114 (LGDLITLLYLFAIARFFFAIS). The Cytoplasmic segment spans residues 115-131 (GLDTGSPFTAIGASREA). The helical transmembrane segment at 132–152 (MLGVLVEPMLLLGLWVAAQVA) threads the bilayer. The Periplasmic portion of the chain corresponds to 153 to 167 (GSTNISNITDTVYHW). The helical transmembrane segment at 168–188 (PLSQSIPLVLALCACAFATFI) threads the bilayer. Topologically, residues 189-221 (EMGKLPFDLAEAEQELQEGPLSEYSGSGFGVMK) are cytoplasmic. The chain crosses the membrane as a helical span at residues 222-242 (WGISLKQLVVLQMFVGVFIPW). Residues 243-253 (GQMETFTAGGL) are Periplasmic-facing. A helical transmembrane segment spans residues 254–274 (LLALVIAIVKLVVGVLVIALF). Over 275 to 284 (ENSMARLRLD) the chain is Cytoplasmic. Residues 285–305 (ITPRITWAGFGFAFLAFVSLL) form a helical membrane-spanning segment. Topologically, residues 306-307 (AA) are periplasmic.

It belongs to the complex I subunit 1 family. As to quaternary structure, FHL comprises of a formate dehydrogenase, unidentified electron carriers and a hydrogenase (isoenzyme 3). In this non-energy conserving pathway molecular hydrogen and carbodioxide from formate are released.

It is found in the cell inner membrane. This is Formate hydrogenlyase subunit 4 (hycD) from Escherichia coli (strain K12).